Reading from the N-terminus, the 303-residue chain is Protein SULFUR DEFICIENCY-INDUCED 2 (303 aa).

A coiled-coil region spans residues 62–89 (RVDSALKDMALLMKQQNRAEEAIDAIQS). TPR repeat units follow at residues 64 to 97 (DSAL…CSRQ), 100 to 133 (ESLD…IYQG), 160 to 193 (SRIL…EPDA), and 195 to 226 (KACN…ENKE). The stretch at 232-253 (RLMARVQELLSELKPQEEEAAA) forms a coiled coil.

Belongs to the MS5 protein family.

The protein localises to the nucleus. Functionally, involved in the utilization of stored sulfate under sulfur-deficient conditions. The polypeptide is Protein SULFUR DEFICIENCY-INDUCED 2 (Arabidopsis thaliana (Mouse-ear cress)).